The primary structure comprises 3589 residues: D-lysergyl-peptide-synthetase subunit 1 (3589 aa).

Residues 344–742 (NCHSRPDSLA…IGRKDLQVKV (399 aa)) are adenylation (A) domain 1. The region spanning 883-952 (VERRLQLLFA…KLRDLAAASS (70 aa)) is the Carrier 1 domain. S915 is modified (O-(pantetheine 4'-phosphoryl)serine). The segment at 995–1380 (EDIYPCTSLQ…SQFQHILTQI (386 aa)) is condensation (C) domain 1. The interval 1424–1826 (QAKAQMQPEA…RRKDSQVKLR (403 aa)) is adenylation (A) domain 2. Positions 1974–2042 (LERELQKIWA…TIEKLAAAAV (69 aa)) constitute a Carrier 2 domain. S2006 is subject to O-(pantetheine 4'-phosphoryl)serine. The segment at 2087–2509 (VEDIYPCSPI…IEMLDEEHRS (423 aa)) is condensation (C) domain 2. The segment at 2534–2929 (CLESPESPAI…GRKDDQVKIR (396 aa)) is adenylation (A) domain 3. The Carrier 3 domain maps to 3064-3132 (LETRLQELVG…RLSELAVVLN (69 aa)). Residue S3096 is modified to O-(pantetheine 4'-phosphoryl)serine. The tract at residues 3187–3585 (TNFIALHFSQ…TYPESLVSEL (399 aa)) is cyclization (Cyc) domain.

This sequence belongs to the NRP synthetase family.

It participates in alkaloid biosynthesis; ergot alkaloid biosynthesis. Functionally, D-lysergyl-peptide-synthetase subunit 1; part of the gene cluster that mediates the biosynthesis of fungal ergot alkaloid ergovaline, the predominant ergopeptine product in E.festucae var. lolii. DmaW catalyzes the first step of ergot alkaloid biosynthesis by condensing dimethylallyl diphosphate (DMAP) and tryptophan to form 4-dimethylallyl-L-tryptophan. The second step is catalyzed by the methyltransferase easF that methylates 4-dimethylallyl-L-tryptophan in the presence of S-adenosyl-L-methionine, resulting in the formation of 4-dimethylallyl-L-abrine. The catalase easC and the FAD-dependent oxidoreductase easE then transform 4-dimethylallyl-L-abrine to chanoclavine-I which is further oxidized by easD in the presence of NAD(+), resulting in the formation of chanoclavine-I aldehyde. Agroclavine dehydrogenase easG then mediates the conversion of chanoclavine-I aldehyde to agroclavine via a non-enzymatic adduct reaction: the substrate is an iminium intermediate that is formed spontaneously from chanoclavine-I aldehyde in the presence of glutathione. The presence of easA is not required to complete this reaction. Further conversion of agroclavine to paspalic acid is a two-step process involving oxidation of agroclavine to elymoclavine and of elymoclavine to paspalic acid, the second step being performed by the elymoclavine oxidase cloA. Paspalic acid is then further converted to D-lysergic acid. Ergovaline is assembled from D-lysergic acid and three different amino acids by the D-lysergyl-peptide-synthetase composed of a monomudular (lpsB) and a trimodular (lpsA) nonribosomal peptide synthetase subunit. The sequence is that of D-lysergyl-peptide-synthetase subunit 1 from Epichloe festucae var. lolii (Neotyphodium lolii).